Reading from the N-terminus, the 499-residue chain is Phenylalanine--tRNA ligase alpha subunit (499 aa).

Residues T333, 372 to 374, and Y412 each bind L-phenylalanine; that span reads QIE. Position 414 (E414) interacts with Mg(2+). F436 provides a ligand contact to L-phenylalanine.

Belongs to the class-II aminoacyl-tRNA synthetase family. Phe-tRNA synthetase alpha subunit type 2 subfamily. In terms of assembly, tetramer of two alpha and two beta subunits. It depends on Mg(2+) as a cofactor.

It localises to the cytoplasm. The catalysed reaction is tRNA(Phe) + L-phenylalanine + ATP = L-phenylalanyl-tRNA(Phe) + AMP + diphosphate + H(+). The protein is Phenylalanine--tRNA ligase alpha subunit of Thermoplasma acidophilum (strain ATCC 25905 / DSM 1728 / JCM 9062 / NBRC 15155 / AMRC-C165).